The following is a 40-amino-acid chain: Cytochrome b6-f complex subunit 5 (40 aa).

The chain crosses the membrane as a helical span at residues 5–25; the sequence is ILLGMVLGFVPVTIAGLLVAA.

The protein belongs to the PetG family. As to quaternary structure, the 4 large subunits of the cytochrome b6-f complex are cytochrome b6, subunit IV (17 kDa polypeptide, PetD), cytochrome f and the Rieske protein, while the 4 small subunits are PetG, PetL, PetM and PetN. The complex functions as a dimer.

The protein localises to the cell inner membrane. Functionally, component of the cytochrome b6-f complex, which mediates electron transfer between photosystem II (PSII) and photosystem I (PSI), cyclic electron flow around PSI, and state transitions. PetG is required for either the stability or assembly of the cytochrome b6-f complex. The polypeptide is Cytochrome b6-f complex subunit 5 (Gloeobacter violaceus (strain ATCC 29082 / PCC 7421)).